A 435-amino-acid chain; its full sequence is Glutamate-1-semialdehyde 2,1-aminomutase (435 aa).

Residue K266 is modified to N6-(pyridoxal phosphate)lysine.

It belongs to the class-III pyridoxal-phosphate-dependent aminotransferase family. HemL subfamily. Homodimer. Pyridoxal 5'-phosphate is required as a cofactor.

The protein localises to the cytoplasm. The enzyme catalyses (S)-4-amino-5-oxopentanoate = 5-aminolevulinate. Its pathway is porphyrin-containing compound metabolism; protoporphyrin-IX biosynthesis; 5-aminolevulinate from L-glutamyl-tRNA(Glu): step 2/2. The protein is Glutamate-1-semialdehyde 2,1-aminomutase of Coxiella burnetii (strain CbuK_Q154) (Coxiella burnetii (strain Q154)).